The following is a 209-amino-acid chain: Uridine kinase (209 aa).

12–19 (GGSGSGKT) is a binding site for ATP.

Belongs to the uridine kinase family.

The protein localises to the cytoplasm. The enzyme catalyses uridine + ATP = UMP + ADP + H(+). It catalyses the reaction cytidine + ATP = CMP + ADP + H(+). It functions in the pathway pyrimidine metabolism; CTP biosynthesis via salvage pathway; CTP from cytidine: step 1/3. The protein operates within pyrimidine metabolism; UMP biosynthesis via salvage pathway; UMP from uridine: step 1/1. The protein is Uridine kinase of Listeria monocytogenes serotype 4b (strain CLIP80459).